We begin with the raw amino-acid sequence, 332 residues long: 4-hydroxy-3-methylbut-2-enyl diphosphate reductase (332 aa).

Cys34 is a [4Fe-4S] cluster binding site. 2 residues coordinate (2E)-4-hydroxy-3-methylbut-2-enyl diphosphate: His63 and His96. The dimethylallyl diphosphate site is built by His63 and His96. Positions 63 and 96 each coordinate isopentenyl diphosphate. Position 118 (Cys118) interacts with [4Fe-4S] cluster. His146 serves as a coordination point for (2E)-4-hydroxy-3-methylbut-2-enyl diphosphate. Residue His146 participates in dimethylallyl diphosphate binding. Residue His146 participates in isopentenyl diphosphate binding. Residue Glu148 is the Proton donor of the active site. Thr186 is a (2E)-4-hydroxy-3-methylbut-2-enyl diphosphate binding site. Cys216 serves as a coordination point for [4Fe-4S] cluster. (2E)-4-hydroxy-3-methylbut-2-enyl diphosphate-binding residues include Ser244, Ser245, Asn246, and Ser289. 4 residues coordinate dimethylallyl diphosphate: Ser244, Ser245, Asn246, and Ser289. Ser244, Ser245, Asn246, and Ser289 together coordinate isopentenyl diphosphate.

Belongs to the IspH family. The cofactor is [4Fe-4S] cluster.

The enzyme catalyses isopentenyl diphosphate + 2 oxidized [2Fe-2S]-[ferredoxin] + H2O = (2E)-4-hydroxy-3-methylbut-2-enyl diphosphate + 2 reduced [2Fe-2S]-[ferredoxin] + 2 H(+). It catalyses the reaction dimethylallyl diphosphate + 2 oxidized [2Fe-2S]-[ferredoxin] + H2O = (2E)-4-hydroxy-3-methylbut-2-enyl diphosphate + 2 reduced [2Fe-2S]-[ferredoxin] + 2 H(+). It functions in the pathway isoprenoid biosynthesis; dimethylallyl diphosphate biosynthesis; dimethylallyl diphosphate from (2E)-4-hydroxy-3-methylbutenyl diphosphate: step 1/1. Its pathway is isoprenoid biosynthesis; isopentenyl diphosphate biosynthesis via DXP pathway; isopentenyl diphosphate from 1-deoxy-D-xylulose 5-phosphate: step 6/6. Catalyzes the conversion of 1-hydroxy-2-methyl-2-(E)-butenyl 4-diphosphate (HMBPP) into a mixture of isopentenyl diphosphate (IPP) and dimethylallyl diphosphate (DMAPP). Acts in the terminal step of the DOXP/MEP pathway for isoprenoid precursor biosynthesis. The protein is 4-hydroxy-3-methylbut-2-enyl diphosphate reductase of Mycobacterium ulcerans (strain Agy99).